A 355-amino-acid chain; its full sequence is Protein FIP1 (355 aa).

The next 4 membrane-spanning stretches (helical) occupy residues 42 to 62 (YLYM…PWMF), 72 to 92 (LLCC…QYFV), 113 to 133 (VVRL…LVIV), and 149 to 169 (IIML…IGYV). Positions 220–337 (LHFLSEEILC…RMSNSELQKE (118 aa)) form a coiled coil. A compositionally biased stretch (basic and acidic residues) spans 331–340 (NSELQKEVAS). A disordered region spans residues 331-355 (NSELQKEVASTRRKQMLETTTSEQP).

It belongs to the TMEM192 family. As to quaternary structure, interacts with FRI.

It is found in the membrane. The sequence is that of Protein FIP1 from Arabidopsis thaliana (Mouse-ear cress).